The chain runs to 513 residues: NAD(P)H-quinone oxidoreductase subunit 2 (513 aa).

The next 14 membrane-spanning stretches (helical) occupy residues 12-32 (TLWP…VDLI), 41-61 (LPYL…PMWI), 77-97 (LSVV…LMSV), 104-124 (SLAT…AMLL), 130-150 (MAMI…LSGY), 165-185 (LLIG…LYGF), 199-219 (IVNL…GICF), 238-258 (PTPV…ALAI), 272-292 (WQTL…VVAI), 300-320 (MLAY…AIGT), 328-348 (ILYI…VVLF), 372-392 (LVLS…GFFG), 394-414 (LYLF…FGLV), and 456-476 (AGML…PPLI). Residues 494-505 (TATPVSRVSTGA) are compositionally biased toward polar residues. Residues 494–513 (TATPVSRVSTGAQAPADHGR) are disordered.

It belongs to the complex I subunit 2 family. As to quaternary structure, NDH-1 can be composed of about 15 different subunits; different subcomplexes with different compositions have been identified which probably have different functions.

It localises to the cell inner membrane. The enzyme catalyses a plastoquinone + NADH + (n+1) H(+)(in) = a plastoquinol + NAD(+) + n H(+)(out). It carries out the reaction a plastoquinone + NADPH + (n+1) H(+)(in) = a plastoquinol + NADP(+) + n H(+)(out). Its function is as follows. NDH-1 shuttles electrons from an unknown electron donor, via FMN and iron-sulfur (Fe-S) centers, to quinones in the respiratory and/or the photosynthetic chain. The immediate electron acceptor for the enzyme in this species is believed to be plastoquinone. Couples the redox reaction to proton translocation, and thus conserves the redox energy in a proton gradient. Cyanobacterial NDH-1 also plays a role in inorganic carbon-concentration. This chain is NAD(P)H-quinone oxidoreductase subunit 2, found in Gloeobacter violaceus (strain ATCC 29082 / PCC 7421).